Consider the following 391-residue polypeptide: MHTTYLKNLIGFESLTPQSNGAIEYIDDLLKEHGFKTEVKIFGETEQVTNLYAVYGNSKPNICFVGHVDVVPAGDPNLWHNSNPFKAHEQEGKIYGRGTVDMKGSIACFLAASLDFIKNNTDFVGSISFLLTSDEEGKAKHGTKEMLQYIYNQGHEIDFAIVGEPTCEKEIGDTIKIGRRGSINFKLAVKGLGGHVAYPQKANNPLPCLIRILNELTNIKLDKGTEFFQNSNLEVTNIDVDNNTTNVIPETATVHFNIRFNNLHSAETLAKQVEEIIKQHCQKHKLDYTLEYNSSADSFIQNPNDKIKEFATIVEKTLNIKPKFSTSGGTSDARFVKNYCPLVEFGLLSDTAHKINEYTKISDLQKLYDVYYNFLMETLNVTGSPPLLGMT.

Position 67 (H67) interacts with Zn(2+). Residue D69 is part of the active site. D101 contributes to the Zn(2+) binding site. Catalysis depends on E135, which acts as the Proton acceptor. Positions 136, 164, and 353 each coordinate Zn(2+).

It belongs to the peptidase M20A family. DapE subfamily. Homodimer. The cofactor is Zn(2+). Co(2+) serves as cofactor.

It catalyses the reaction N-succinyl-(2S,6S)-2,6-diaminopimelate + H2O = (2S,6S)-2,6-diaminopimelate + succinate. It participates in amino-acid biosynthesis; L-lysine biosynthesis via DAP pathway; LL-2,6-diaminopimelate from (S)-tetrahydrodipicolinate (succinylase route): step 3/3. Functionally, catalyzes the hydrolysis of N-succinyl-L,L-diaminopimelic acid (SDAP), forming succinate and LL-2,6-diaminopimelate (DAP), an intermediate involved in the bacterial biosynthesis of lysine and meso-diaminopimelic acid, an essential component of bacterial cell walls. The chain is Succinyl-diaminopimelate desuccinylase from Rickettsia bellii (strain RML369-C).